A 117-amino-acid polypeptide reads, in one-letter code: Immunoglobulin heavy variable 1-58 (117 aa).

Residues 1–19 form the signal peptide; the sequence is MDWIWRILFLVGAATGAHS. The interval 20–44 is framework-1; sequence QMQLVQSGPEVKKPGTSVKVSCKAS. One can recognise an Ig-like domain in the interval 20 to 117; that stretch reads QMQLVQSGPE…EDTAVYYCAA (98 aa). Cysteines 41 and 115 form a disulfide. The tract at residues 45-52 is complementarity-determining-1; the sequence is GFTFTSSA. Residues 53–69 are framework-2; the sequence is VQWVRQARGQRLEWIGW. A complementarity-determining-2 region spans residues 70–77; sequence IVVGSGNT. Residues 78–115 are framework-3; the sequence is NYAQKFQERVTITRDMSTSTAYMELSSLRSEDTAVYYC. Residues 116–117 form a complementarity-determining-3 region; the sequence is AA.

In terms of assembly, immunoglobulins are composed of two identical heavy chains and two identical light chains; disulfide-linked.

The protein localises to the secreted. Its subcellular location is the cell membrane. V region of the variable domain of immunoglobulin heavy chains that participates in the antigen recognition. Immunoglobulins, also known as antibodies, are membrane-bound or secreted glycoproteins produced by B lymphocytes. In the recognition phase of humoral immunity, the membrane-bound immunoglobulins serve as receptors which, upon binding of a specific antigen, trigger the clonal expansion and differentiation of B lymphocytes into immunoglobulins-secreting plasma cells. Secreted immunoglobulins mediate the effector phase of humoral immunity, which results in the elimination of bound antigens. The antigen binding site is formed by the variable domain of one heavy chain, together with that of its associated light chain. Thus, each immunoglobulin has two antigen binding sites with remarkable affinity for a particular antigen. The variable domains are assembled by a process called V-(D)-J rearrangement and can then be subjected to somatic hypermutations which, after exposure to antigen and selection, allow affinity maturation for a particular antigen. The sequence is that of Immunoglobulin heavy variable 1-58 from Homo sapiens (Human).